The following is a 473-amino-acid chain: Ras-GEF domain-containing family member 1B (473 aa).

The N-terminal Ras-GEF domain maps to 34 to 161; the sequence is HDNNLLSGSL…NVQQMMQCLI (128 aa). Residues 205-453 enclose the Ras-GEF domain; it reads DPYTLAQQLT…YLASYESEGP (249 aa).

As to quaternary structure, interacts with CCDC124 during cytokinesis. Interacts with Ras family proteins. As to expression, constitutively expressed in brain, intestine and testis. Low constitutive expression, if any, in heart, lung, lymph nodes and thymus. Up-regulated in heart, kidney, liver, lymph nodes, spleen and thymus at day 20 after infection with Trypanosoma cruzi. Not detected in muscle.

It localises to the early endosome. Its subcellular location is the late endosome. The protein resides in the midbody. In terms of biological role, guanine nucleotide exchange factor (GEF) with specificity for RAP2A, it doesn't seems to activate other Ras family proteins (in vitro). In Mus musculus (Mouse), this protein is Ras-GEF domain-containing family member 1B (Rasgef1b).